We begin with the raw amino-acid sequence, 85 residues long: MPMVTRRLRDPDINPCLSESDASTRCMDENNYDRERCSSYFLKYKNCRRFWNSVMIQRRQNGVQPSMPTAAERDEILGAMQKMPY.

The CHCH domain occupies 13 to 55 (INPCLSESDASTRCMDENNYDRERCSSYFLKYKNCRRFWNSVM). Short sequence motifs (cx9C motif) lie at residues 16 to 26 (CLSESDASTRC) and 37 to 47 (CSSYFLKYKNC). 2 disulfide bridges follow: Cys-16/Cys-47 and Cys-26/Cys-37.

This sequence belongs to the CHCHD7 family. In terms of assembly, monomer.

It localises to the mitochondrion intermembrane space. This Mus musculus (Mouse) protein is Coiled-coil-helix-coiled-coil-helix domain-containing protein 7 (Chchd7).